A 491-amino-acid chain; its full sequence is Probable glycine dehydrogenase (decarboxylating) subunit 2 (491 aa).

At K264 the chain carries N6-(pyridoxal phosphate)lysine.

Belongs to the GcvP family. C-terminal subunit subfamily. As to quaternary structure, the glycine cleavage system is composed of four proteins: P, T, L and H. In this organism, the P 'protein' is a heterodimer of two subunits. It depends on pyridoxal 5'-phosphate as a cofactor.

It carries out the reaction N(6)-[(R)-lipoyl]-L-lysyl-[glycine-cleavage complex H protein] + glycine + H(+) = N(6)-[(R)-S(8)-aminomethyldihydrolipoyl]-L-lysyl-[glycine-cleavage complex H protein] + CO2. In terms of biological role, the glycine cleavage system catalyzes the degradation of glycine. The P protein binds the alpha-amino group of glycine through its pyridoxal phosphate cofactor; CO(2) is released and the remaining methylamine moiety is then transferred to the lipoamide cofactor of the H protein. The chain is Probable glycine dehydrogenase (decarboxylating) subunit 2 from Coxiella burnetii (strain CbuG_Q212) (Coxiella burnetii (strain Q212)).